The following is a 390-amino-acid chain: Chalcone synthase (390 aa).

The active site involves Cys-164.

It belongs to the thiolase-like superfamily. Chalcone/stilbene synthases family.

It catalyses the reaction (E)-4-coumaroyl-CoA + 3 malonyl-CoA + 3 H(+) = 2',4,4',6'-tetrahydroxychalcone + 3 CO2 + 4 CoA. It functions in the pathway secondary metabolite biosynthesis; flavonoid biosynthesis. Its function is as follows. The primary product of this enzyme is 4,2',4',6'-tetrahydroxychalcone (also termed naringenin-chalcone or chalcone) which undergoes enzyme-catalyzed or spontaneous isomerization into naringenin. The polypeptide is Chalcone synthase (Hypericum androsaemum (Tutsan)).